Consider the following 119-residue polypeptide: MAQHFRVGRLSQEIQREVNDILLKRVRDPRVKDVTITGVEVSGDLQHATIYYSILSDKASDEKKVQTGLDKATSLIRGELGHRLSIYVTPEIKFERDKSVQYGDHINELLRKLHSTDKF.

It belongs to the RbfA family. In terms of assembly, monomer. Binds 30S ribosomal subunits, but not 50S ribosomal subunits or 70S ribosomes.

It is found in the cytoplasm. Functionally, one of several proteins that assist in the late maturation steps of the functional core of the 30S ribosomal subunit. Associates with free 30S ribosomal subunits (but not with 30S subunits that are part of 70S ribosomes or polysomes). Required for efficient processing of 16S rRNA. May interact with the 5'-terminal helix region of 16S rRNA. The polypeptide is Ribosome-binding factor A (Ligilactobacillus salivarius (strain UCC118) (Lactobacillus salivarius)).